Here is a 334-residue protein sequence, read N- to C-terminus: Protein OPG181 (334 aa).

The protein belongs to the orthopoxvirus OPG181 family.

The sequence is that of Protein OPG181 (OPG181) from Homo sapiens (Human).